The following is a 699-amino-acid chain: TPR repeat-containing thioredoxin TTL1 (699 aa).

The disordered stretch occupies residues 1–211; it reads MPKSVKPISE…SSSRSSSTVA (211 aa). Basic and acidic residues predominate over residues 9–20; the sequence is SESDKLSDHLRD. Residues serine 39 and serine 42 each carry the phosphoserine modification. Composition is skewed to low complexity over residues 52-70 and 83-135; these read TTTTTTTTTSSSSSSSSGS and RSNS…TSPA. The span at 166-182 shows a compositional bias: gly residues; sequence SGTGTYGHGSIMRGGGI. Over residues 195–210 the composition is skewed to low complexity; it reads NSPVNVGSSSRSSSTV. TPR repeat units lie at residues 227 to 260, 262 to 294, 296 to 328, 419 to 452, 465 to 498, 499 to 532, and 534 to 566; these read SEEVKRVGNEMYRKGLFNEALKLYDRAIALSPTN, AYRSNRAAALIGLSRIGEAVKECEDAVRSDPNY, RAHHRLALLLIRLGQVNSARKHLCFLGRPSDPM, AYIYFVKAQIEMALGRFENAVMAAEKASQIDPRC, VARARARGNDLYKSERYTEASSAYAEGLRLDPCN, AILYCNRAACWFKLGMWERSIEDCNQALRYQPSY, and KPLLRRAASNSKMERWGAAVSDYEALIRELPHD. Residues 605–691 form the Thioredoxin domain; sequence QFKSAMNLPG…IVCPSKEVLE (87 aa).

In terms of tissue distribution, expressed in the root elongation zone, stele, root cap, embryo vascular system, leaf axilar buds, silique abscission zone and guard cells.

Its function is as follows. Involved in responses to osmotic stress and abscisic acid (ABA). May act as a positive regulator of ABA signaling during germination and seedling development under stress. This chain is TPR repeat-containing thioredoxin TTL1 (TTL1), found in Arabidopsis thaliana (Mouse-ear cress).